A 468-amino-acid chain; its full sequence is Monocarboxylate transporter 6 (468 aa).

The Cytoplasmic portion of the chain corresponds to 1–13 (MARALEQADGRWA). The helical transmembrane segment at 14–34 (WVVLLSSLVTQALTLGFPTCI) threads the bilayer. The Extracellular segment spans residues 35–53 (GVFFTDLQRDFQASNSETS). The helical transmembrane segment at 54–74 (WFPSILGAMVHGGGPLCSILV) threads the bilayer. At 75–80 (KHFGCR) the chain is on the cytoplasmic side. A helical transmembrane segment spans residues 81–101 (VTMMLGGVLASLGMVVSTFSG). A topological domain (extracellular) is located at residue serine 102. The helical transmembrane segment at 103 to 122 (LTHLFLTAGVITGLGMCFSF) threads the bilayer. Topologically, residues 123–138 (QSSITVVGLYFVRRRP) are cytoplasmic. A helical transmembrane segment spans residues 139–159 (LANALASMGLSMGVTLWPLLA). The Extracellular portion of the chain corresponds to 160–171 (RYLLETLGWRGA). A helical transmembrane segment spans residues 172-192 (FLIFGGILLHCCVCGALLRPV). Topologically, residues 193-239 (ATNEVPEPKEDPLLPPKIPTRSCLATCVSTIRYHLAFDILRHNMGFC) are cytoplasmic. The chain crosses the membrane as a helical span at residues 240-260 (IYVTGVTWMNLGFALPHIFLV). Topologically, residues 261-274 (PYAMHHGVDDYWAA) are extracellular. A helical transmembrane segment spans residues 275-295 (MLMSIVGFCNIFLRPMAGLLL). The Cytoplasmic portion of the chain corresponds to 296–306 (AGRKSLAAYRK). The helical transmembrane segment at 307–327 (YLFAVAILINGLTNLICTVSA) threads the bilayer. At 328-330 (DFR) the chain is on the extracellular side. A helical membrane pass occupies residues 331-351 (VLLGYCLVYSLSMCGVGILVF). The Cytoplasmic segment spans residues 352 to 368 (QVLMDIVPMDRFPSALG). A helical transmembrane segment spans residues 369–389 (LFTILCGVTSLISPPLAGLLL). Over 390–396 (DKTNNFS) the chain is Extracellular. The helical transmembrane segment at 397 to 417 (YVFYMSSGFLVSGSLILGVGF) threads the bilayer. Residues 418–468 (YAAEKKKLKQDGQAKMENATSEMTPMHDLTSEDKDSAKKQPYPESIYMTNV) lie on the Cytoplasmic side of the membrane. A disordered region spans residues 429 to 468 (GQAKMENATSEMTPMHDLTSEDKDSAKKQPYPESIYMTNV). Residues 446–455 (LTSEDKDSAK) show a composition bias toward basic and acidic residues.

The protein belongs to the major facilitator superfamily. Monocarboxylate porter (TC 2.A.1.13) family.

The protein localises to the cell membrane. Its function is as follows. Proton-linked monocarboxylate transporter. Catalyzes the rapid transport across the plasma membrane of many monocarboxylates such as lactate, pyruvate, branched-chain oxo acids derived from leucine, valine and isoleucine, and the ketone bodies acetoacetate, beta-hydroxybutyrate and acetate. This chain is Monocarboxylate transporter 6 (Slc16a5), found in Mus musculus (Mouse).